We begin with the raw amino-acid sequence, 217 residues long: External core antigen (217 aa).

Residues 1–20 form the signal peptide; sequence MYLFHLCLVFACVSCPTVQA. The HBEAG stretch occupies residues 26 to 28; that stretch reads GWL. Positions 181–210 are enriched in basic residues; it reads RRGSARVVRSPRRRTPSPRRRRSQSPRRRP. The segment at 181–217 is disordered; the sequence is RRGSARVVRSPRRRTPSPRRRRSQSPRRRPQSPASNC. One copy of the 1; half-length repeat lies at 190-196; that stretch reads SPRRRTP. The interval 190–211 is 3 X 8 AA approximate repeats of S-P-R-R-R-R-[PS]-Q; the sequence is SPRRRTPSPRRRRSQSPRRRPQ. Residues 190-217 constitute a propeptide that is removed on maturation; that stretch reads SPRRRTPSPRRRRSQSPRRRPQSPASNC. Repeat copies occupy residues 197–204 and 205–211.

The protein belongs to the orthohepadnavirus precore antigen family. Homodimerizes. Phosphorylated. In terms of processing, cleaved by host furin.

Its subcellular location is the secreted. It localises to the host nucleus. Functionally, may regulate immune response to the intracellular capsid in acting as a T-cell tolerogen, by having an immunoregulatory effect which prevents destruction of infected cells by cytotoxic T-cells. This immune regulation may predispose to chronicity during perinatal infections and prevent severe liver injury during adult infections. The protein is External core antigen of Urocitellus parryii kennicottii (ASHV).